Here is a 2696-residue protein sequence, read N- to C-terminus: Histone-lysine N-methyltransferase, H3 lysine-36 specific (2696 aa).

Ser-117 is modified (phosphoserine). Disordered stretches follow at residues 207–252 and 281–311; these read MGSE…EKAA and DPDSSTSTLGNMLELPGTSSSSTSQELPFCQ. A compositionally biased stretch (basic and acidic residues) spans 236 to 248; the sequence is QKNKQRNEVDGSN. Composition is skewed to polar residues over residues 281-290 and 297-306; these read DPDSSTSTLG and GTSSSSTSQE. In terms of domain architecture, PWWP 1 spans 323 to 388; it reads VGDLIWAKFK…AGKAIVMFEG (66 aa). 2 positions are modified to phosphoserine: Ser-483 and Ser-486. The tract at residues 487–514 is disordered; that stretch reads ADEKEKPCAKSRARKSSDNPKRTSVKKG. Ser-766 is subject to Phosphoserine. The disordered stretch occupies residues 872–891; it reads LGEDVSDSGTSKPSKPLLFS. Lys-906 participates in a covalent cross-link: Glycyl lysine isopeptide (Lys-Gly) (interchain with G-Cter in SUMO2). 7 disordered regions span residues 936–1035, 1067–1093, 1112–1134, 1243–1272, 1294–1344, 1382–1428, and 1480–1534; these read YRSP…DAFS, VLQGDRERGGSLRGGAEDPSKEDPLQI, SKVKQSDPGKISEKGLSFENGKG, SIGDMEKEPGIPSLTPQAELPEPAVRSEKK, PKKK…EPPV, SPRP…KKGD, and KMQC…MQGE. A compositionally biased stretch (low complexity) spans 948–961; that stretch reads SPVGVSKVLVSGGS. The span at 971–982 shows a compositional bias: polar residues; sequence GTQNSANPSPSG. Basic and acidic residues-rich tracts occupy residues 1000-1017, 1070-1090, and 1112-1124; these read SDKRDLPASGKSRSDCVT, GDRERGGSLRGGAEDPSKEDP, and SKVKQSDPGKISE. Basic and acidic residues predominate over residues 1300 to 1314; sequence KVQEQVHKVSSRCEE. Residues 1323–1337 are compositionally biased toward polar residues; sequence SSAQNKQVDENSLIS. Lys-1339 participates in a covalent cross-link: Glycyl lysine isopeptide (Lys-Gly) (interchain with G-Cter in SUMO2). Residue Ser-1510 is modified to Phosphoserine. Residues 1513–1523 show a composition bias toward basic and acidic residues; sequence ETVEEGVEHDP. 3 PHD-type zinc fingers span residues 1543-1589, 1590-1646, and 1707-1751; these read ENVC…CRTG, IHTC…CHAA, and VSWC…CKAG. The region spanning 1756–1818 is the PWWP 2 domain; it reads YREIVWVKVG…QARVFPYMEG (63 aa). In terms of domain architecture, AWS spans 1890-1940; the sequence is SEIPRCNCKATDENPCGIDSECINRMLLYECHPTVCPAGGRCQNQCFSKRQ. In terms of domain architecture, SET spans 1942–2059; it reads PEVEIFRTLQ…AGTELTFNYN (118 aa). S-adenosyl-L-methionine-binding positions include 1952–1954, 1994–1997, 2020–2021, Asn-2065, and Lys-2071; these read RGW, TNFY, and NH. The tract at residues 2060–2066 is inhibits enzyme activity in the absence of bound histone; that stretch reads LECLGNG. The Post-SET domain occupies 2066 to 2082; the sequence is GKTVCKCGAPNCSGFLG. Positions 2091–2111 are disordered; the sequence is ATEEKSKKFKKKQQGKRRTQG. The span at 2097–2108 shows a compositional bias: basic residues; that stretch reads KKFKKKQQGKRR. The PHD-type 4; atypical zinc finger occupies 2118 to 2165; that stretch reads EDECFSCGDAGQLVSCKKPGCPKVYHADCLNLTKRPAGKWECPWHQCD. Residues 2213 to 2422 are disordered; it reads LEPGEIREYV…SLSQRLPPPE (210 aa). Pro residues predominate over residues 2222 to 2232; the sequence is VPPPVPLPPGP. The span at 2281–2298 shows a compositional bias: basic and acidic residues; it reads RPLERTDSRPQPLDKVRD. Positions 2303 to 2314 are enriched in polar residues; sequence GTKSQSLVSSQR. The segment covering 2330-2348 has biased composition (low complexity); the sequence is SDKPSPVTSPSSSPSVRSQ. The residue at position 2369 (Ser-2369) is a Phosphoserine. Polar residues-rich tracts occupy residues 2371–2381 and 2394–2404; these read RPQSLEKTSVP and ITSSPKPQTSD. A Phosphothreonine modification is found at Thr-2462. 4 disordered regions span residues 2464 to 2499, 2553 to 2575, 2595 to 2616, and 2665 to 2696; these read RQKERAASPHQVTPQADEKMPVLESSSWPASKGLGH, TQASGRASAGAEQTPGPLSQSPG, KSGQSFRSLGKAPASLPTEEKK, and LGRGQDPKPEQNTLPALNQAPSSHKCAESEQK. Residue Ser-2471 is modified to Phosphoserine. A Glycyl lysine isopeptide (Lys-Gly) (interchain with G-Cter in SUMO2) cross-link involves residue Lys-2616. Positions 2674 to 2686 are enriched in polar residues; sequence EQNTLPALNQAPS.

It belongs to the class V-like SAM-binding methyltransferase superfamily. As to quaternary structure, interacts with the ligand-binding domains of RARA and THRA in the absence of ligand; in the presence of ligand the interaction is severely disrupted but some binding still occurs. Interacts with the ligand-binding domains of RXRA and ESRRA only in the presence of ligand. Interacts with ZNF496. Interacts with AR DNA- and ligand-binding domains. In terms of tissue distribution, expressed in the fetal/adult brain, kidney, skeletal muscle, spleen, and the thymus, and faintly in the lung.

It localises to the nucleus. The protein localises to the chromosome. It carries out the reaction L-lysyl(36)-[histone H3] + 2 S-adenosyl-L-methionine = N(6),N(6)-dimethyl-L-lysyl(36)-[histone H3] + 2 S-adenosyl-L-homocysteine + 2 H(+). Its function is as follows. Histone methyltransferase that dimethylates Lys-36 of histone H3 (H3K36me2). Transcriptional intermediary factor capable of both negatively or positively influencing transcription, depending on the cellular context. This is Histone-lysine N-methyltransferase, H3 lysine-36 specific (NSD1) from Homo sapiens (Human).